A 503-amino-acid chain; its full sequence is Methylthioalkylmalate synthase 3, chloroplastic (503 aa).

The transit peptide at 1-51 (MASLLLTSSSMITTSCRSMVLRSGLPIGSSFPSLRLTRPYDKATLFVSCCS) directs the protein to the chloroplast. One can recognise a Pyruvate carboxyltransferase domain in the interval 85 to 359 (VRVLDTTLRD…YTKIDSRQIM (275 aa)).

It belongs to the alpha-IPM synthase/homocitrate synthase family. Requires Mn(2+) as cofactor. In terms of tissue distribution, highly expressed in roots, leaves, and siliques. Lower amounts in stems and flowers.

It is found in the plastid. The protein resides in the chloroplast. It catalyses the reaction an omega-(methylsulfanyl)-2-oxoalkanoate + acetyl-CoA + H2O = a 2-(omega-methylsulfanyl)alkylmalate + CoA + H(+). With respect to regulation, not activated by ATP. In terms of biological role, determines the side chain length of aliphatic glucosinolate structures. Accepts all the omega-methylthio-2-oxoalkanoic acids needed to form the known C3 to C8 glucosinolates. Also able to convert pyruvate to citramalate, 2-oxoisovalerate to isopropylmalate, 4-methyl-2-oxopentanoate and 5-methyl-2-oxohexanoate for Leu-derived glucosinolates, 3-methyl-2-oxopentanoate for Ile-derived glucosinolates and phenylpyruvate to phenylethylglucosinolate. The polypeptide is Methylthioalkylmalate synthase 3, chloroplastic (MAM3) (Arabidopsis thaliana (Mouse-ear cress)).